The following is a 264-amino-acid chain: MVTMKDLLECGVHFGHQTRRWNPKMKRFIFGVRKNIHIIDLQKTLRYFRYTYNIIKQAASEGKVIMFVGTKRQASETLKQYAESVNAPYVNYRWLGGMLTNFSTIKKSIRRLEIIEEMESSGQIDLLTKKEKLMLQRKKEKLDKYLGGVRHMKKAPDMIFVIDAAKEKIAVAEARRLGIPVVAPLDTNCDPDMVDYPIPGNDDAIRSIQLFCKEISEAILEGRSENKDEQNEQGEQIAPVTNEEKQEILDEVTAEVATQMQEEA.

A disordered region spans residues Gly-222–Gln-246.

The protein belongs to the universal ribosomal protein uS2 family.

The polypeptide is Small ribosomal subunit protein uS2 (Helicobacter hepaticus (strain ATCC 51449 / 3B1)).